The following is a 605-amino-acid chain: FAD-linked oxidoreductase easE (605 aa).

Positions 1 to 20 are cleaved as a signal peptide; sequence MRHFVTFVVGFLLSWGFLSS. N-linked (GlcNAc...) asparagine glycans are attached at residues Asn46 and Asn105. The FAD-binding PCMH-type domain occupies 122–307; sequence CHQGRLPLYS…TQATVRAFPD (186 aa). N-linked (GlcNAc...) asparagine glycosylation occurs at Asn370.

It belongs to the oxygen-dependent FAD-linked oxidoreductase family. Requires FAD as cofactor.

The protein operates within alkaloid biosynthesis; ergot alkaloid biosynthesis. Its function is as follows. FAD-linked oxidoreductase; part of the gene cluster that mediates the biosynthesis of fungal ergot alkaloid ergovaline, the predominant ergopeptine product in E.festucae var. lolii. DmaW catalyzes the first step of ergot alkaloid biosynthesis by condensing dimethylallyl diphosphate (DMAP) and tryptophan to form 4-dimethylallyl-L-tryptophan. The second step is catalyzed by the methyltransferase easF that methylates 4-dimethylallyl-L-tryptophan in the presence of S-adenosyl-L-methionine, resulting in the formation of 4-dimethylallyl-L-abrine. The catalase easC and the FAD-dependent oxidoreductase easE then transform 4-dimethylallyl-L-abrine to chanoclavine-I which is further oxidized by easD in the presence of NAD(+), resulting in the formation of chanoclavine-I aldehyde. Agroclavine dehydrogenase easG then mediates the conversion of chanoclavine-I aldehyde to agroclavine via a non-enzymatic adduct reaction: the substrate is an iminium intermediate that is formed spontaneously from chanoclavine-I aldehyde in the presence of glutathione. The presence of easA is not required to complete this reaction. Further conversion of agroclavine to paspalic acid is a two-step process involving oxidation of agroclavine to elymoclavine and of elymoclavine to paspalic acid, the second step being performed by the elymoclavine oxidase cloA. Paspalic acid is then further converted to D-lysergic acid. Ergovaline is assembled from D-lysergic acid and three different amino acids by the D-lysergyl-peptide-synthetase composed of a monomudular (lpsB) and a trimodular (lpsA) nonribosomal peptide synthetase subunit. The sequence is that of FAD-linked oxidoreductase easE from Epichloe festucae var. lolii (Neotyphodium lolii).